Here is a 236-residue protein sequence, read N- to C-terminus: uncharacterized protein (236 aa).

Positions 117-160 constitute an RPE1 insert domain; sequence RYLSKQTDRNEFITTAESYIGISKHKSTNITYKLPLKEQFCNMS.

This is an uncharacterized protein from Rickettsia prowazekii (strain Madrid E).